We begin with the raw amino-acid sequence, 427 residues long: Trigger factor (427 aa).

One can recognise a PPIase FKBP-type domain in the interval 163–248 (GDTAVIDFEG…VHEIKAKELP (86 aa)).

It belongs to the FKBP-type PPIase family. Tig subfamily.

The protein resides in the cytoplasm. The enzyme catalyses [protein]-peptidylproline (omega=180) = [protein]-peptidylproline (omega=0). Functionally, involved in protein export. Acts as a chaperone by maintaining the newly synthesized protein in an open conformation. Functions as a peptidyl-prolyl cis-trans isomerase. This chain is Trigger factor, found in Bacillus cytotoxicus (strain DSM 22905 / CIP 110041 / 391-98 / NVH 391-98).